Reading from the N-terminus, the 307-residue chain is N-acetylmuramic acid 6-phosphate etherase (307 aa).

The 164-residue stretch at 59–222 (TTKALSQGGK…STGVMVRLGK (164 aa)) folds into the SIS domain. The Proton donor role is filled by E87. E118 is a catalytic residue.

This sequence belongs to the GCKR-like family. MurNAc-6-P etherase subfamily. Homodimer.

It catalyses the reaction N-acetyl-D-muramate 6-phosphate + H2O = N-acetyl-D-glucosamine 6-phosphate + (R)-lactate. The protein operates within amino-sugar metabolism; N-acetylmuramate degradation. Functionally, specifically catalyzes the cleavage of the D-lactyl ether substituent of MurNAc 6-phosphate, producing GlcNAc 6-phosphate and D-lactate. This is N-acetylmuramic acid 6-phosphate etherase from Trichodesmium erythraeum (strain IMS101).